Consider the following 232-residue polypeptide: 5'-methylthioadenosine/S-adenosylhomocysteine nucleosidase (232 aa).

E12 functions as the Proton acceptor in the catalytic mechanism. Residues G78, V152, and M173–E174 contribute to the substrate site. D197 (proton donor) is an active-site residue.

The protein belongs to the PNP/UDP phosphorylase family. MtnN subfamily. In terms of assembly, homodimer.

It carries out the reaction S-adenosyl-L-homocysteine + H2O = S-(5-deoxy-D-ribos-5-yl)-L-homocysteine + adenine. The enzyme catalyses S-methyl-5'-thioadenosine + H2O = 5-(methylsulfanyl)-D-ribose + adenine. The catalysed reaction is 5'-deoxyadenosine + H2O = 5-deoxy-D-ribose + adenine. It participates in amino-acid biosynthesis; L-methionine biosynthesis via salvage pathway; S-methyl-5-thio-alpha-D-ribose 1-phosphate from S-methyl-5'-thioadenosine (hydrolase route): step 1/2. Its function is as follows. Catalyzes the irreversible cleavage of the glycosidic bond in both 5'-methylthioadenosine (MTA) and S-adenosylhomocysteine (SAH/AdoHcy) to adenine and the corresponding thioribose, 5'-methylthioribose and S-ribosylhomocysteine, respectively. Also cleaves 5'-deoxyadenosine, a toxic by-product of radical S-adenosylmethionine (SAM) enzymes, into 5-deoxyribose and adenine. Thus, is required for in vivo function of the radical SAM enzymes biotin synthase and lipoic acid synthase, that are inhibited by 5'-deoxyadenosine accumulation. This chain is 5'-methylthioadenosine/S-adenosylhomocysteine nucleosidase, found in Buchnera aphidicola subsp. Acyrthosiphon pisum (strain 5A).